A 725-amino-acid polypeptide reads, in one-letter code: Polyribonucleotide nucleotidyltransferase (725 aa).

Asp488 and Asp494 together coordinate Mg(2+). One can recognise a KH domain in the interval 555–614 (PRMITMKIHPDKIREVIGKGGSTIQALTKETGTTIDIQEDGTITIASTSTDGMAEAKRRI). In terms of domain architecture, S1 motif spans 624 to 692 (GKIYAGTVLK…EKGRLRLSLK (69 aa)). The tract at residues 702 to 725 (ISPIAQGDAPAAAPAAPASPDQQQ) is disordered. The span at 706–725 (AQGDAPAAAPAAPASPDQQQ) shows a compositional bias: low complexity.

This sequence belongs to the polyribonucleotide nucleotidyltransferase family. The cofactor is Mg(2+).

It is found in the cytoplasm. The catalysed reaction is RNA(n+1) + phosphate = RNA(n) + a ribonucleoside 5'-diphosphate. Functionally, involved in mRNA degradation. Catalyzes the phosphorolysis of single-stranded polyribonucleotides processively in the 3'- to 5'-direction. In Cupriavidus metallidurans (strain ATCC 43123 / DSM 2839 / NBRC 102507 / CH34) (Ralstonia metallidurans), this protein is Polyribonucleotide nucleotidyltransferase.